A 397-amino-acid chain; its full sequence is CCA-adding enzyme (397 aa).

Positions 8 and 11 each coordinate ATP. Residues Gly8 and Arg11 each coordinate CTP. Positions 21 and 23 each coordinate Mg(2+). Positions 91, 137, and 140 each coordinate ATP. Arg91, Arg137, and Arg140 together coordinate CTP. The HD domain occupies 213 to 324 (NLDAAIATLK…LALFNGCDAW (112 aa)).

This sequence belongs to the tRNA nucleotidyltransferase/poly(A) polymerase family. Bacterial CCA-adding enzyme type 2 subfamily. Mg(2+) is required as a cofactor.

The enzyme catalyses a tRNA precursor + 2 CTP + ATP = a tRNA with a 3' CCA end + 3 diphosphate. The catalysed reaction is a tRNA with a 3' CCA end + 2 CTP + ATP = a tRNA with a 3' CCACCA end + 3 diphosphate. Its function is as follows. Catalyzes the addition and repair of the essential 3'-terminal CCA sequence in tRNAs without using a nucleic acid template. Adds these three nucleotides in the order of C, C, and A to the tRNA nucleotide-73, using CTP and ATP as substrates and producing inorganic pyrophosphate. tRNA 3'-terminal CCA addition is required both for tRNA processing and repair. Also involved in tRNA surveillance by mediating tandem CCA addition to generate a CCACCA at the 3' terminus of unstable tRNAs. While stable tRNAs receive only 3'-terminal CCA, unstable tRNAs are marked with CCACCA and rapidly degraded. The sequence is that of CCA-adding enzyme from Alteromonas mediterranea (strain DSM 17117 / CIP 110805 / LMG 28347 / Deep ecotype).